A 270-amino-acid polypeptide reads, in one-letter code: UPF0354 protein Bcer98_3354 (270 aa).

It belongs to the UPF0354 family.

The polypeptide is UPF0354 protein Bcer98_3354 (Bacillus cytotoxicus (strain DSM 22905 / CIP 110041 / 391-98 / NVH 391-98)).